A 186-amino-acid chain; its full sequence is dCTP deaminase, dUMP-forming (186 aa).

DCTP contacts are provided by residues arginine 101–arginine 106, aspartate 119, threonine 127–glutamate 129, glutamine 148, tyrosine 162, and glutamine 171. The active-site Proton donor/acceptor is the glutamate 129.

It belongs to the dCTP deaminase family. As to quaternary structure, homotrimer.

The catalysed reaction is dCTP + 2 H2O = dUMP + NH4(+) + diphosphate. The protein operates within pyrimidine metabolism; dUMP biosynthesis; dUMP from dCTP: step 1/1. Bifunctional enzyme that catalyzes both the deamination of dCTP to dUTP and the hydrolysis of dUTP to dUMP without releasing the toxic dUTP intermediate. This is dCTP deaminase, dUMP-forming from Coprothermobacter proteolyticus (strain ATCC 35245 / DSM 5265 / OCM 4 / BT).